The primary structure comprises 361 residues: Porphobilinogen deaminase (361 aa).

Ser-2 is subject to N-acetylserine. Position 69 is a phosphoserine (Ser-69). The residue at position 74 (Lys-74) is an N6-acetyllysine. Ser-147 bears the Phosphoserine mark. Cys-261 carries the post-translational modification S-(dipyrrolylmethanemethyl)cysteine.

Belongs to the HMBS family. As to quaternary structure, monomer. It depends on dipyrromethane as a cofactor.

The protein localises to the cytoplasm. The protein resides in the cytosol. It catalyses the reaction 4 porphobilinogen + H2O = hydroxymethylbilane + 4 NH4(+). Its pathway is porphyrin-containing compound metabolism; protoporphyrin-IX biosynthesis; coproporphyrinogen-III from 5-aminolevulinate: step 2/4. Functionally, as part of the heme biosynthetic pathway, catalyzes the sequential polymerization of four molecules of porphobilinogen to form hydroxymethylbilane, also known as preuroporphyrinogen. Catalysis begins with the assembly of the dipyrromethane cofactor by the apoenzyme from two molecules of porphobilinogen or from preuroporphyrinogen. The covalently linked cofactor acts as a primer, around which the tetrapyrrole product is assembled. In the last step of catalysis, the product, preuroporphyrinogen, is released, leaving the cofactor bound to the holodeaminase intact. The polypeptide is Porphobilinogen deaminase (Hmbs) (Mus musculus (Mouse)).